The sequence spans 490 residues: Cytochrome P450 2C29 (490 aa).

The first 25 residues, 1–25, serve as a signal peptide directing secretion; the sequence is MDLVVFLALTLSCLILLSLWRQSSG. Residues Lys-249, Lys-252, and Lys-375 each carry the N6-acetyllysine modification. Cys-435 provides a ligand contact to heme.

This sequence belongs to the cytochrome P450 family. Heme is required as a cofactor. In terms of tissue distribution, expressed in liver as well as in extrahepatic tissues including brain, kidney, lung, heart, and intestine.

It is found in the endoplasmic reticulum membrane. The protein resides in the microsome membrane. It catalyses the reaction an organic molecule + reduced [NADPH--hemoprotein reductase] + O2 = an alcohol + oxidized [NADPH--hemoprotein reductase] + H2O + H(+). The enzyme catalyses (5Z,8Z,11Z,14Z)-eicosatetraenoate + reduced [NADPH--hemoprotein reductase] + O2 = 14,15-epoxy-(5Z,8Z,11Z)-eicosatrienoate + oxidized [NADPH--hemoprotein reductase] + H2O + H(+). Its pathway is lipid metabolism; arachidonate metabolism. In terms of biological role, a cytochrome P450 monooxygenase that selectively catalyzes the epoxidation of 14,15 double bond of (5Z,8Z,11Z,14Z)-eicosatetraenoic acid (arachidonate) forming 14,15-epoxyeicosatrienoic acid (14,15-EET) regioisomer. Mechanistically, uses molecular oxygen inserting one oxygen atom into a substrate, and reducing the second into a water molecule, with two electrons provided by NADPH via cytochrome P450 reductase (CPR; NADPH--hemoprotein reductase). The sequence is that of Cytochrome P450 2C29 from Mus musculus (Mouse).